Here is a 311-residue protein sequence, read N- to C-terminus: Olfactory receptor 10G8 (311 aa).

Residues 1–23 (MSNASLLTAFILMGLPHAPALDA) lie on the Extracellular side of the membrane. An N-linked (GlcNAc...) asparagine glycan is attached at asparagine 3. A helical transmembrane segment spans residues 24-44 (PLFGVFLVVYVLTVLGNLLIL). The Cytoplasmic segment spans residues 45-52 (LVIRVDSH). Residues 53-73 (LHTTMYYFLTNLSFIDMWFST) form a helical membrane-spanning segment. Residues 74-98 (VTVPKLLMTLVFPSGRAISFHSCMA) are Extracellular-facing. A disulfide bridge connects residues cysteine 96 and cysteine 188. Residues 99-119 (QLYFFHFLGGTECFLYRVMSC) traverse the membrane as a helical segment. Over 120 to 138 (DRYLAISYPLRYTSMMTGR) the chain is Cytoplasmic. The helical transmembrane segment at 139–159 (SCTLLATSTWLSGSLHSAVQA) threads the bilayer. Residues 160 to 196 (ILTFHLPYCGPNWIQHYLCDAPPILKLACADTSAIET) are Extracellular-facing. A helical transmembrane segment spans residues 197–216 (VIFVTVGIVASGCFVLIVLS). Over 217–236 (YVSIVCSILRIRTSEGKHRA) the chain is Cytoplasmic. A helical membrane pass occupies residues 237-257 (FQTCASHCIVVLCFFGPGLFI). Residues 258–268 (YLRPGSRKAVD) lie on the Extracellular side of the membrane. A helical transmembrane segment spans residues 269–289 (GVVAVFYTVLTPLLNPVVYTL). Over 290–311 (RNKEVKKALLKLKDKVAHSQSK) the chain is Cytoplasmic.

This sequence belongs to the G-protein coupled receptor 1 family.

Its subcellular location is the cell membrane. Functionally, odorant receptor. The polypeptide is Olfactory receptor 10G8 (OR10G8) (Homo sapiens (Human)).